The sequence spans 267 residues: Octanoyltransferase (267 aa).

Residues 77–265 form the BPL/LPL catalytic domain; the sequence is GTASELVWLV…AFESVFGPRQ (189 aa). Residues 116–123, 196–198, and 209–211 contribute to the substrate site; these read RGGEYTYH, AIG, and GIA. Cys227 serves as the catalytic Acyl-thioester intermediate.

The protein belongs to the LipB family.

It is found in the cytoplasm. The catalysed reaction is octanoyl-[ACP] + L-lysyl-[protein] = N(6)-octanoyl-L-lysyl-[protein] + holo-[ACP] + H(+). The protein operates within protein modification; protein lipoylation via endogenous pathway; protein N(6)-(lipoyl)lysine from octanoyl-[acyl-carrier-protein]: step 1/2. In terms of biological role, catalyzes the transfer of endogenously produced octanoic acid from octanoyl-acyl-carrier-protein onto the lipoyl domains of lipoate-dependent enzymes. Lipoyl-ACP can also act as a substrate although octanoyl-ACP is likely to be the physiological substrate. This is Octanoyltransferase from Brucella suis biovar 1 (strain 1330).